Here is a 143-residue protein sequence, read N- to C-terminus: Putative pre-16S rRNA nuclease (143 aa).

Belongs to the YqgF nuclease family.

The protein resides in the cytoplasm. Functionally, could be a nuclease involved in processing of the 5'-end of pre-16S rRNA. This Salinibacter ruber (strain DSM 13855 / M31) protein is Putative pre-16S rRNA nuclease.